The primary structure comprises 231 residues: Coproheme decarboxylase (231 aa).

Residue Lys-44 forms an Isoglutamyl lysine isopeptide (Lys-Gln) (interchain with Q-Cter in protein Pup) linkage. Tyr-133 is a catalytic residue. Fe-coproporphyrin III is bound at residue His-156.

It belongs to the ChdC family. Type 2 subfamily. Requires Fe-coproporphyrin III as cofactor.

The catalysed reaction is Fe-coproporphyrin III + 2 H2O2 + 2 H(+) = heme b + 2 CO2 + 4 H2O. The enzyme catalyses Fe-coproporphyrin III + H2O2 + H(+) = harderoheme III + CO2 + 2 H2O. It catalyses the reaction harderoheme III + H2O2 + H(+) = heme b + CO2 + 2 H2O. Its pathway is porphyrin-containing compound metabolism; protoheme biosynthesis. Involved in coproporphyrin-dependent heme b biosynthesis. Catalyzes the decarboxylation of Fe-coproporphyrin III (coproheme) to heme b (protoheme IX), the last step of the pathway. The reaction occurs in a stepwise manner with a three-propionate intermediate. The sequence is that of Coproheme decarboxylase from Mycolicibacterium smegmatis (strain ATCC 700084 / mc(2)155) (Mycobacterium smegmatis).